The following is an 845-amino-acid chain: Leucine--tRNA ligase (845 aa).

The short motif at 40 to 51 (PYPSGAGLHVGH) is the 'HIGH' region element. Positions 623-627 (KMSKS) match the 'KMSKS' region motif. Position 626 (K626) interacts with ATP.

The protein belongs to the class-I aminoacyl-tRNA synthetase family.

Its subcellular location is the cytoplasm. The enzyme catalyses tRNA(Leu) + L-leucine + ATP = L-leucyl-tRNA(Leu) + AMP + diphosphate. This chain is Leucine--tRNA ligase, found in Protochlamydia amoebophila (strain UWE25).